A 69-amino-acid chain; its full sequence is Large ribosomal subunit protein bL32c (69 aa).

It belongs to the bacterial ribosomal protein bL32 family.

The protein localises to the plastid. It localises to the chloroplast. The protein is Large ribosomal subunit protein bL32c of Pelargonium hortorum (Common geranium).